The sequence spans 353 residues: Quinolinate synthase (353 aa).

2 residues coordinate iminosuccinate: His47 and Ser68. Cys113 provides a ligand contact to [4Fe-4S] cluster. Iminosuccinate is bound by residues 139 to 141 (YAN) and Ser156. Cys200 is a [4Fe-4S] cluster binding site. Iminosuccinate is bound by residues 226–228 (HPE) and Thr243. Residue Cys297 participates in [4Fe-4S] cluster binding.

It belongs to the quinolinate synthase family. Type 1 subfamily. [4Fe-4S] cluster serves as cofactor.

It localises to the cytoplasm. The catalysed reaction is iminosuccinate + dihydroxyacetone phosphate = quinolinate + phosphate + 2 H2O + H(+). The protein operates within cofactor biosynthesis; NAD(+) biosynthesis; quinolinate from iminoaspartate: step 1/1. Catalyzes the condensation of iminoaspartate with dihydroxyacetone phosphate to form quinolinate. This is Quinolinate synthase from Vibrio cholerae serotype O1 (strain ATCC 39541 / Classical Ogawa 395 / O395).